Reading from the N-terminus, the 336-residue chain is Isopentenyl-diphosphate delta-isomerase (336 aa).

5-6 (RK) provides a ligand contact to substrate. FMN-binding positions include 60 to 62 (AMT), Ser90, and Asn117. Gln147 lines the substrate pocket. Mg(2+) is bound at residue Glu148. FMN contacts are provided by residues Lys179, Ser204, Thr209, 253 to 255 (GVR), and 274 to 275 (SR).

The protein belongs to the IPP isomerase type 2 family. In terms of assembly, homooctamer. Dimer of tetramers. FMN is required as a cofactor. It depends on NADPH as a cofactor. Mg(2+) serves as cofactor.

It is found in the cytoplasm. The enzyme catalyses isopentenyl diphosphate = dimethylallyl diphosphate. Functionally, involved in the biosynthesis of isoprenoids. Catalyzes the 1,3-allylic rearrangement of the homoallylic substrate isopentenyl (IPP) to its allylic isomer, dimethylallyl diphosphate (DMAPP). The sequence is that of Isopentenyl-diphosphate delta-isomerase from Streptococcus pneumoniae (strain ATCC BAA-255 / R6).